The primary structure comprises 1023 residues: Sodium/potassium-transporting ATPase subunit alpha-1 (1023 aa).

Positions 1–5 are excised as a propeptide; it reads MAFKV. The span at 1–11 shows a compositional bias: basic and acidic residues; that stretch reads MAFKVGRDKYE. Residues 1-38 are disordered; sequence MAFKVGRDKYEPAAVSEQGDKKGKKGKKDRDMDELKKE. Residues 6–87 lie on the Cytoplasmic side of the membrane; sequence GRDKYEPAAV…NALTPPPTTP (82 aa). Lys9 bears the N6-acetyllysine mark. Tyr10 is modified (phosphotyrosine). At Ser16 the chain carries Phosphoserine; by PKC. Lys21 is modified (N6-acetyllysine). Residues 28–38 show a composition bias toward basic and acidic residues; the sequence is KDRDMDELKKE. Ser40 and Ser47 each carry phosphoserine. The phosphoinositide-3 kinase binding stretch occupies residues 82 to 84; that stretch reads PPP. A helical transmembrane segment spans residues 88–108; that stretch reads EWIKFCRQLFGGFSMLLWIGA. The Extracellular portion of the chain corresponds to 109-131; it reads ILCFLAYSIQAATEEEPQNDNLY. The chain crosses the membrane as a helical span at residues 132-152; that stretch reads LGVVLSAVVIITGCFSYYQEA. Over 153 to 288 the chain is Cytoplasmic; the sequence is KSSKIMESFK…GGQTPIAAEI (136 aa). Residues 216–235 are disordered; the sequence is SSLTGESEPQTRSPDFTNEN. The residue at position 228 (Ser228) is a Phosphoserine. Tyr260 carries the phosphotyrosine modification. Residues 289–308 form a helical membrane-spanning segment; the sequence is EHFIHIITGVAVFLGVSFFI. At 309–320 the chain is on the extracellular side; the sequence is LSLILEYTWLEA. A helical membrane pass occupies residues 321–338; it reads VIFLIGIIVANVPEGLLA. Residues 339–772 lie on the Cytoplasmic side of the membrane; it reads TVTVCLTLTA…EEGRLIFDNL (434 aa). Asp376 acts as the 4-aspartylphosphate intermediate in catalysis. Phosphoserine occurs at positions 452 and 484. Lys487 contributes to the ATP binding site. Phosphotyrosine is present on Tyr542. The tract at residues 596 to 717 is mediates interaction with SCN7A; sequence RAAVPDAVGK…QGAIVAVTGD (122 aa). Lys661 is modified (N6-succinyllysine). Residues Ser668 and Ser675 each carry the phosphoserine modification. The Mg(2+) site is built by Asp717 and Asp721. A helical transmembrane segment spans residues 773–792; sequence KKSIAYTLTSNIPEITPFLI. The Extracellular segment spans residues 793–802; sequence FIIANIPLPL. A helical membrane pass occupies residues 803–823; that stretch reads GTVTILCIDLGTDMVPAISLA. Over 824 to 843 the chain is Cytoplasmic; that stretch reads YEQAESDIMKRQPRNPKTDK. Residues 844–866 form a helical membrane-spanning segment; that stretch reads LVNERLISTAYGQIGMIQALGGF. At 867 to 918 the chain is on the extracellular side; sequence FTYFVILAENGFLPLHLLGLRVDWDDRWINDVEDSYGQQWTYEQRKIVEFTC. The chain crosses the membrane as a helical span at residues 919–938; that stretch reads HTAFFVSIVVVQWADLVICK. The Cytoplasmic portion of the chain corresponds to 939-951; sequence TRRNSVFQQGMKN. Position 943 is a phosphoserine; by PKA (Ser943). Residues 952 to 970 form a helical membrane-spanning segment; sequence KILIFGLFEETALAAFLSY. At 971–985 the chain is on the extracellular side; that stretch reads CPGMGVALRMYPLKP. The chain crosses the membrane as a helical span at residues 986 to 1006; sequence TWWFCAFPYSLLIFVYDEVRK. Over 1007 to 1023 the chain is Cytoplasmic; it reads LIIRRRPGGWVEKETYY.

It belongs to the cation transport ATPase (P-type) (TC 3.A.3) family. Type IIC subfamily. The sodium/potassium-transporting ATPase is composed of a catalytic alpha subunit, an auxiliary non-catalytic beta subunit and an additional regulatory subunit. Interacts with regulatory subunit FXYD1. Interacts with regulatory subunit FXYD3. Interacts with SIK1. Interacts with SLC35G1 and STIM1. Interacts with CLN3; this interaction regulates the sodium/potassium-transporting ATPase complex localization at the plasma membrane. Interacts with SCN7A; activates ATP1A1 P-type sodium:potassium-exchanging transporter activity which indirectly signals to nearby neurons to regulate sodium homeostasis. Phosphorylation on Tyr-10 modulates pumping activity. Phosphorylation of Ser-943 by PKA modulates the response of ATP1A1 to PKC. Dephosphorylation by protein phosphatase 2A (PP2A) following increases in intracellular sodium, leading to increase catalytic activity.

Its subcellular location is the cell membrane. The protein resides in the basolateral cell membrane. It localises to the sarcolemma. It is found in the cell projection. The protein localises to the axon. Its subcellular location is the melanosome. The catalysed reaction is K(+)(out) + Na(+)(in) + ATP + H2O = K(+)(in) + Na(+)(out) + ADP + phosphate + H(+). Functionally, this is the catalytic component of the active enzyme, which catalyzes the hydrolysis of ATP coupled with the exchange of sodium and potassium ions across the plasma membrane. This action creates the electrochemical gradient of sodium and potassium ions, providing the energy for active transport of various nutrients. Could also be part of an osmosensory signaling pathway that senses body-fluid sodium levels and controls salt intake behavior as well as voluntary water intake to regulate sodium homeostasis. This chain is Sodium/potassium-transporting ATPase subunit alpha-1 (ATP1A1), found in Pongo abelii (Sumatran orangutan).